Here is a 720-residue protein sequence, read N- to C-terminus: Catalase-peroxidase (720 aa).

A signal peptide spans 1–21 (MSENKCPVMHGSATTTENSMA). Residues 94–222 (WHAAGTYRIA…LAAVMMGLIY (129 aa)) constitute a cross-link (tryptophyl-tyrosyl-methioninium (Trp-Tyr) (with M-248)). Residue His95 is the Proton acceptor of the active site. Residues 222-248 (YVNPEGVDGKPDPLKTAQDIRETFARM) constitute a cross-link (tryptophyl-tyrosyl-methioninium (Tyr-Met) (with W-94)). His263 contacts heme b.

This sequence belongs to the peroxidase family. Peroxidase/catalase subfamily. As to quaternary structure, homodimer or homotetramer. Heme b serves as cofactor. Post-translationally, formation of the three residue Trp-Tyr-Met cross-link is important for the catalase, but not the peroxidase activity of the enzyme.

The catalysed reaction is H2O2 + AH2 = A + 2 H2O. It carries out the reaction 2 H2O2 = O2 + 2 H2O. Its function is as follows. Bifunctional enzyme with both catalase and broad-spectrum peroxidase activity. The chain is Catalase-peroxidase from Shewanella denitrificans (strain OS217 / ATCC BAA-1090 / DSM 15013).